A 1035-amino-acid polypeptide reads, in one-letter code: Protein hir-1 (1035 aa).

WD repeat units lie at residues 15–54 (QKDF…NSHD), 68–107 (HHLG…PSHT), 129–168 (GHDN…KLKT), 171–210 (VHQS…PNAT), 232–275 (PLTT…SEIN), 299–338 (DENS…PVLI), and 342–383 (IASK…WVAK). Residues 393–479 (KYGGSRKGMG…PEEESADKTA (87 aa)) are disordered. Positions 408 to 425 (DGLHLENHSKEKELRGAE) are enriched in basic and acidic residues.

This sequence belongs to the WD repeat HIR1 family.

The protein localises to the nucleus. Functionally, required for replication-independent chromatin assembly and for the periodic repression of histone gene transcription during the cell cycle. The sequence is that of Protein hir-1 (hir-1) from Neurospora crassa (strain ATCC 24698 / 74-OR23-1A / CBS 708.71 / DSM 1257 / FGSC 987).